A 428-amino-acid chain; its full sequence is Adenylosuccinate synthetase (428 aa).

Residues 11 to 17 and 39 to 41 each bind GTP; these read GDEGKGK and GHT. Aspartate 12 (proton acceptor) is an active-site residue. Residues aspartate 12 and glycine 39 each coordinate Mg(2+). IMP-binding positions include 12 to 15, 37 to 40, threonine 130, arginine 144, asparagine 226, threonine 241, and arginine 305; these read DEGK and NAGH. Histidine 40 (proton donor) is an active-site residue. 301-307 contacts substrate; it reads VTTGRKR. Residues arginine 307, 333–335, and 415–417 each bind GTP; these read KLD and GTG.

The protein belongs to the adenylosuccinate synthetase family. Homodimer. Requires Mg(2+) as cofactor.

Its subcellular location is the cytoplasm. The enzyme catalyses IMP + L-aspartate + GTP = N(6)-(1,2-dicarboxyethyl)-AMP + GDP + phosphate + 2 H(+). The protein operates within purine metabolism; AMP biosynthesis via de novo pathway; AMP from IMP: step 1/2. In terms of biological role, plays an important role in the de novo pathway and in the salvage pathway of purine nucleotide biosynthesis. Catalyzes the first committed step in the biosynthesis of AMP from IMP. This Candida dubliniensis (strain CD36 / ATCC MYA-646 / CBS 7987 / NCPF 3949 / NRRL Y-17841) (Yeast) protein is Adenylosuccinate synthetase.